Reading from the N-terminus, the 393-residue chain is NADH-quinone oxidoreductase subunit D (393 aa).

It belongs to the complex I 49 kDa subunit family. As to quaternary structure, NDH-1 is composed of 14 different subunits. Subunits NuoB, C, D, E, F, and G constitute the peripheral sector of the complex.

The protein localises to the cell inner membrane. It carries out the reaction a quinone + NADH + 5 H(+)(in) = a quinol + NAD(+) + 4 H(+)(out). Functionally, NDH-1 shuttles electrons from NADH, via FMN and iron-sulfur (Fe-S) centers, to quinones in the respiratory chain. The immediate electron acceptor for the enzyme in this species is believed to be ubiquinone. Couples the redox reaction to proton translocation (for every two electrons transferred, four hydrogen ions are translocated across the cytoplasmic membrane), and thus conserves the redox energy in a proton gradient. This chain is NADH-quinone oxidoreductase subunit D, found in Ehrlichia ruminantium (strain Gardel).